The following is a 503-amino-acid chain: Arabinose import ATP-binding protein AraG 1 (503 aa).

ABC transporter domains follow at residues 5–240 and 251–497; these read LRFD…MVGR and RTLG…LPQT. 37-44 lines the ATP pocket; the sequence is GENGAGKS.

It belongs to the ABC transporter superfamily. Arabinose importer (TC 3.A.1.2.2) family. The complex is composed of two ATP-binding proteins (AraG), two transmembrane proteins (AraH) and a solute-binding protein (AraF).

Its subcellular location is the cell inner membrane. It catalyses the reaction L-arabinose(out) + ATP + H2O = L-arabinose(in) + ADP + phosphate + H(+). Its function is as follows. Part of the ABC transporter complex AraFGH involved in arabinose import. Responsible for energy coupling to the transport system. The chain is Arabinose import ATP-binding protein AraG 1 from Burkholderia cenocepacia (strain HI2424).